We begin with the raw amino-acid sequence, 165 residues long: Shikimate kinase (165 aa).

An ATP-binding site is contributed by G11 to T16. Residue T15 coordinates Mg(2+). Residues D33, R57, and G78 each contribute to the substrate site. R116 provides a ligand contact to ATP. R134 lines the substrate pocket.

The protein belongs to the shikimate kinase family. As to quaternary structure, monomer. Mg(2+) serves as cofactor.

It is found in the cytoplasm. It carries out the reaction shikimate + ATP = 3-phosphoshikimate + ADP + H(+). Its pathway is metabolic intermediate biosynthesis; chorismate biosynthesis; chorismate from D-erythrose 4-phosphate and phosphoenolpyruvate: step 5/7. In terms of biological role, catalyzes the specific phosphorylation of the 3-hydroxyl group of shikimic acid using ATP as a cosubstrate. The chain is Shikimate kinase from Bacillus cereus (strain AH187).